Consider the following 307-residue polypeptide: ATP-dependent (S)-NAD(P)H-hydrate dehydratase (307 aa).

Positions 1–291 (MDHFLKLLPK…DEIPKLVRDV (291 aa)) constitute a YjeF C-terminal domain. (6S)-NADPHX contacts are provided by residues Gly-96 and 150 to 156 (NIVEFSR). ATP is bound by residues 194 to 198 (KGEVD) and 214 to 223 (SSLRRCGGQG). Asp-224 serves as a coordination point for (6S)-NADPHX.

This sequence belongs to the NnrD/CARKD family. The cofactor is Mg(2+).

It carries out the reaction (6S)-NADHX + ATP = ADP + phosphate + NADH + H(+). The enzyme catalyses (6S)-NADPHX + ATP = ADP + phosphate + NADPH + H(+). Functionally, catalyzes the dehydration of the S-form of NAD(P)HX at the expense of ATP, which is converted to ADP. Together with NAD(P)HX epimerase, which catalyzes the epimerization of the S- and R-forms, the enzyme allows the repair of both epimers of NAD(P)HX, a damaged form of NAD(P)H that is a result of enzymatic or heat-dependent hydration. The polypeptide is ATP-dependent (S)-NAD(P)H-hydrate dehydratase (Caenorhabditis briggsae).